Here is a 497-residue protein sequence, read N- to C-terminus: Tryptophan decarboxylase 2 (497 aa).

Pyridoxal 5'-phosphate is bound by residues Ala162, Ser163, Thr257, and Asn311. An N6-(pyridoxal phosphate)lysine modification is found at Lys314.

This sequence belongs to the group II decarboxylase family. Pyridoxal 5'-phosphate is required as a cofactor.

The catalysed reaction is L-tryptophan + H(+) = tryptamine + CO2. In terms of biological role, involved in serotonin biosynthesis. Catalyzes the decarboxylation of L-tryptophan to tryptamine, which is converted to serotonin by tryptamine 5-hydroxylase. May play a minor role in serotonin biosynthetis during senescence. Accumulation of serotonin attenuates leaf senescence. The sequence is that of Tryptophan decarboxylase 2 from Oryza sativa subsp. japonica (Rice).